Consider the following 133-residue polypeptide: Small ribosomal subunit protein bS18 (133 aa).

The interval 1 to 63 is disordered; sequence MARPDMGGPK…GDEGGGRRGF (63 aa). Positions 9 to 39 are enriched in gly residues; that stretch reads PKTGGFGGPRSGGFGGGGGGGFGGGGFGGGR. The segment covering 40–59 has biased composition (basic and acidic residues); it reads GGDRGDRGDRDDRGGDEGGG.

Belongs to the bacterial ribosomal protein bS18 family. In terms of assembly, part of the 30S ribosomal subunit. Forms a tight heterodimer with protein bS6.

Binds as a heterodimer with protein bS6 to the central domain of the 16S rRNA, where it helps stabilize the platform of the 30S subunit. This Anaeromyxobacter dehalogenans (strain 2CP-1 / ATCC BAA-258) protein is Small ribosomal subunit protein bS18.